A 202-amino-acid polypeptide reads, in one-letter code: Peptide deformylase 2 (202 aa).

Cys120 and His162 together coordinate Fe cation. Glu163 is a catalytic residue. His166 lines the Fe cation pocket.

The protein belongs to the polypeptide deformylase family. It depends on Fe(2+) as a cofactor.

The enzyme catalyses N-terminal N-formyl-L-methionyl-[peptide] + H2O = N-terminal L-methionyl-[peptide] + formate. In terms of biological role, removes the formyl group from the N-terminal Met of newly synthesized proteins. Requires at least a dipeptide for an efficient rate of reaction. N-terminal L-methionine is a prerequisite for activity but the enzyme has broad specificity at other positions. This chain is Peptide deformylase 2, found in Rickettsia conorii (strain ATCC VR-613 / Malish 7).